Here is a 335-residue protein sequence, read N- to C-terminus: MGENKKVIFSGIQPSGELTIGNYFGAIKNWVKLQDEYDCYYCIVDLHAITVKQEAKDLRRRTLQLIATYIASGIDPEKNTIFIQSHVPAHVQAQWILNCMSYVGELSRMTQFKDKSKKYEDTGIGAGLLNYPVLMAADILIYQADLVPVGKDQTQHIELTRDLAQRFNSTYSETFKIPEGYIPTGGAKIMSLQEPLKKMSKSSDNPNSFILIMDPPEVIKRKIARAVTDNVGVVKYTDDQPGVKNLMNIMSCCTGMSVKDIEDKYEGQGYSKFKEDVADALIQELEPIQNKVNELLKDKAYLQDICKKGAQKASYIANKTVSKMMRKVGFILPEK.

Residues 13–15 (QPS) and 21–22 (GN) each bind ATP. Positions 14–22 (PSGELTIGN) match the 'HIGH' region motif. Asp138 serves as a coordination point for L-tryptophan. ATP-binding positions include 150–152 (GKD), Ile189, and 198–202 (KMSKS). The 'KMSKS' region signature appears at 198 to 202 (KMSKS).

This sequence belongs to the class-I aminoacyl-tRNA synthetase family. As to quaternary structure, homodimer.

Its subcellular location is the cytoplasm. It carries out the reaction tRNA(Trp) + L-tryptophan + ATP = L-tryptophyl-tRNA(Trp) + AMP + diphosphate + H(+). Catalyzes the attachment of tryptophan to tRNA(Trp). The chain is Tryptophan--tRNA ligase from Clostridium acetobutylicum (strain ATCC 824 / DSM 792 / JCM 1419 / IAM 19013 / LMG 5710 / NBRC 13948 / NRRL B-527 / VKM B-1787 / 2291 / W).